The sequence spans 70 residues: Cold shock-like protein CspJ (70 aa).

The region spanning 7 to 67 (GLVKWFNPEK…GPKGPSAVNV (61 aa)) is the CSD domain.

Its subcellular location is the cytoplasm. This chain is Cold shock-like protein CspJ (cspJ), found in Salmonella typhi.